The chain runs to 203 residues: MPIGVPKVPFRSPGEEDAVWVDVNRLHRERLLFLGQEVDNEVSNQLVGLMVYLSIEDATKDLYLFINSPGGWVIPGMAIYDTMQFVSPDVHTICMGLAASMGSLILVGGEITKRLAFPHARVMIHQPASSFYEAQAGEFILEAEELLKLRETLTKVYVQRTGNPLWAVSEDMERDAFMSATEAQAHGIVDLVAVENENTNDFV.

The Nucleophile role is filled by S100. The active site involves H125.

The protein belongs to the peptidase S14 family. Component of the chloroplastic Clp protease core complex.

It localises to the plastid. Its subcellular location is the chloroplast stroma. It catalyses the reaction Hydrolysis of proteins to small peptides in the presence of ATP and magnesium. alpha-casein is the usual test substrate. In the absence of ATP, only oligopeptides shorter than five residues are hydrolyzed (such as succinyl-Leu-Tyr-|-NHMec, and Leu-Tyr-Leu-|-Tyr-Trp, in which cleavage of the -Tyr-|-Leu- and -Tyr-|-Trp bonds also occurs).. Its function is as follows. Cleaves peptides in various proteins in a process that requires ATP hydrolysis. Has a chymotrypsin-like activity. Plays a major role in the degradation of misfolded proteins. This chain is ATP-dependent Clp protease proteolytic subunit, found in Dioscorea elephantipes (Elephant's foot yam).